Consider the following 199-residue polypeptide: FMN-dependent NADH:quinone oxidoreductase 2 (199 aa).

Residues Ser-10, 16–18 (SVS), and 96–99 (MYNF) each bind FMN.

The protein belongs to the azoreductase type 1 family. As to quaternary structure, homodimer. FMN is required as a cofactor.

It carries out the reaction 2 a quinone + NADH + H(+) = 2 a 1,4-benzosemiquinone + NAD(+). The enzyme catalyses N,N-dimethyl-1,4-phenylenediamine + anthranilate + 2 NAD(+) = 2-(4-dimethylaminophenyl)diazenylbenzoate + 2 NADH + 2 H(+). Its function is as follows. Quinone reductase that provides resistance to thiol-specific stress caused by electrophilic quinones. In terms of biological role, also exhibits azoreductase activity. Catalyzes the reductive cleavage of the azo bond in aromatic azo compounds to the corresponding amines. The sequence is that of FMN-dependent NADH:quinone oxidoreductase 2 from Pseudomonas fluorescens (strain ATCC BAA-477 / NRRL B-23932 / Pf-5).